A 211-amino-acid chain; its full sequence is Small ribosomal subunit protein uS5 (211 aa).

Residues 51 to 114 form the S5 DRBM domain; the sequence is LKHEVLDVSL…ANAKLNITPV (64 aa).

It belongs to the universal ribosomal protein uS5 family. In terms of assembly, part of the 30S ribosomal subunit. Contacts protein S4.

In terms of biological role, with S4 and S12 plays an important role in translational accuracy. The polypeptide is Small ribosomal subunit protein uS5 (Ignicoccus hospitalis (strain KIN4/I / DSM 18386 / JCM 14125)).